The primary structure comprises 359 residues: Type-1 angiotensin II receptor A (359 aa).

At 1 to 25 (MALNSSTEDGIKRIQDDCPRAGRHS) the chain is on the extracellular side. Residue Asn4 is glycosylated (N-linked (GlcNAc...) asparagine). Positions 15 and 17 each coordinate angiotensin II. 2 disulfides stabilise this stretch: Cys18/Cys274 and Cys101/Cys180. A helical membrane pass occupies residues 26 to 55 (YIFVMIPTLYSIIFVVGIFGNSLVVIVIYF). The Cytoplasmic segment spans residues 56–61 (YMKLKT). Residues 62–89 (VASVFLLNLALADLCFLLTLPLWAVYTA) form a helical membrane-spanning segment. Residues 90 to 98 (MEYRWPFGN) lie on the Extracellular side of the membrane. The chain crosses the membrane as a helical span at residues 99–125 (HLCKIASASVSFNLYASVFLLTCLSID). Topologically, residues 126-141 (RYLAIVHPMKSRLRRT) are cytoplasmic. The chain crosses the membrane as a helical span at residues 142-165 (MLVAKVTCIIIWLMAGLASLPAVI). The Extracellular portion of the chain corresponds to 166-190 (HRNVYFIENTNITVCAFHYESRNST). Arg167 lines the angiotensin II pocket. A glycan (N-linked (GlcNAc...) asparagine) is linked at Asn176. The angiotensin II site is built by Phe182, His183, and Tyr184. N-linked (GlcNAc...) asparagine glycosylation is present at Asn188. Residues 191-216 (LPIGLGLTKNILGFLFPFLIILTSYT) traverse the membrane as a helical segment. Lys199 is a binding site for angiotensin II. At 217-239 (LIWKALKKAYEIQKNKPRNDDIF) the chain is on the cytoplasmic side. A helical transmembrane segment spans residues 240–268 (RIIMAIVLFFFFSWVPHQIFTFLDVLIQL). Over 269–278 (GVIHDCKIAD) the chain is Extracellular. The chain crosses the membrane as a helical span at residues 279–304 (IVDTAMPITICIAYFNNCLNPLFYGF). Topologically, residues 305-359 (LGKKFKKYFLQLLKYIPPKAKSHSSLSTKMSTLSYRPSDNMSSAAKKPASCSEVE) are cytoplasmic. The span at 335-347 (STLSYRPSDNMSS) shows a compositional bias: polar residues. A disordered region spans residues 335-359 (STLSYRPSDNMSSAAKKPASCSEVE). Cys355 is lipidated: S-palmitoyl cysteine.

This sequence belongs to the G-protein coupled receptor 1 family. As to quaternary structure, interacts with MAS1. Interacts with ARRB1. Interacts with FLNA (via filamin repeat 21); increases PKA-mediated phosphorylation of FLNA. C-terminal Ser or Thr residues may be phosphorylated.

It localises to the cell membrane. Functionally, receptor for angiotensin II, a vasoconstricting peptide, which acts as a key regulator of blood pressure and sodium retention by the kidney. The activated receptor in turn couples to G-alpha proteins G(q) (GNAQ, GNA11, GNA14 or GNA15) and thus activates phospholipase C and increases the cytosolic Ca(2+) concentrations, which in turn triggers cellular responses such as stimulation of protein kinase C. The chain is Type-1 angiotensin II receptor A (Agtr1a) from Mus musculus (Mouse).